A 426-amino-acid polypeptide reads, in one-letter code: DNA polymerase processivity factor component OPG148 (426 aa).

This sequence belongs to the orthopoxvirus OPG148 family. Interacts with the DNA polymerase catalytic subunit OPG071. Interacts with UDG/OPG116. Component of the uracil-DNA glycosylase(UDG)-OPG148-polymerase complex; OPG148 and UDG form a heterodimeric processivity factor that associates with OPG071 to form the processive polymerase holoenzyme. Interacts with OPG117.

Its function is as follows. Plays an essential role in viral DNA replication by acting as the polymerase processivity factor together with protein OPG116. Serves as a bridge which links the DNA polymerase OPG071 and the uracil DNA glycosylase. In Variola virus (isolate Human/India/Ind3/1967) (VARV), this protein is DNA polymerase processivity factor component OPG148 (OPG148).